Consider the following 431-residue polypeptide: Polygalacturonase ADPG1 (431 aa).

Positions 1-23 (MARCCRHLAVFLCVLLMLSLCKA) are cleaved as a signal peptide. PbH1 repeat units lie at residues 223-249 (CNKV…HITN) and 250-271 (TQNI…SIED). Residue Asp-264 is the Proton donor of the active site. His-287 is an active-site residue. 3 PbH1 repeats span residues 303–324 (VSGI…RIKT), 332–353 (AKNI…IIDQ), and 398–420 (CQGI…NANV).

The protein belongs to the glycosyl hydrolase 28 family. Expressed in flower buds and siliques, in the dehiscence zone of anthers (stomium cells) and maturing siliques. Expressed in stigma during pollen tube growth. Not expressed in seeds or in the floral part or leaf abscission zone but found at the junction between the seed and the funiculus at the site of seed abscission.

The protein localises to the secreted. It localises to the cell wall. Its subcellular location is the cytoplasm. The catalysed reaction is (1,4-alpha-D-galacturonosyl)n+m + H2O = (1,4-alpha-D-galacturonosyl)n + (1,4-alpha-D-galacturonosyl)m.. In terms of biological role, polygalacturonase involved in cell separation in the final stages of pod shatter and in anther dehiscence. Not involved in floral organ abscission. The sequence is that of Polygalacturonase ADPG1 (ADPG1) from Arabidopsis thaliana (Mouse-ear cress).